Consider the following 377-residue polypeptide: Alanine racemase (377 aa).

Lysine 35 serves as the catalytic Proton acceptor; specific for D-alanine. Lysine 35 is subject to N6-(pyridoxal phosphate)lysine. A substrate-binding site is contributed by arginine 130. The active-site Proton acceptor; specific for L-alanine is tyrosine 260. Methionine 312 lines the substrate pocket.

It belongs to the alanine racemase family. The cofactor is pyridoxal 5'-phosphate.

It catalyses the reaction L-alanine = D-alanine. The protein operates within amino-acid biosynthesis; D-alanine biosynthesis; D-alanine from L-alanine: step 1/1. Functionally, catalyzes the interconversion of L-alanine and D-alanine. May also act on other amino acids. The chain is Alanine racemase (alr) from Leptothrix cholodnii (strain ATCC 51168 / LMG 8142 / SP-6) (Leptothrix discophora (strain SP-6)).